A 624-amino-acid chain; its full sequence is tRNA uridine 5-carboxymethylaminomethyl modification enzyme MnmG (624 aa).

FAD is bound by residues 14–19, valine 126, and serine 181; that span reads GGGHAG. 273–287 contacts NAD(+); sequence GPRYCPSIEDKVVRF. Glutamine 370 is a binding site for FAD.

It belongs to the MnmG family. Homodimer. Heterotetramer of two MnmE and two MnmG subunits. The cofactor is FAD.

It is found in the cytoplasm. In terms of biological role, NAD-binding protein involved in the addition of a carboxymethylaminomethyl (cmnm) group at the wobble position (U34) of certain tRNAs, forming tRNA-cmnm(5)s(2)U34. This chain is tRNA uridine 5-carboxymethylaminomethyl modification enzyme MnmG, found in Geotalea uraniireducens (strain Rf4) (Geobacter uraniireducens).